The sequence spans 1050 residues: MDS1 and EVI1 complex locus protein EVI1-B (1050 aa).

3 C2H2-type zinc fingers span residues 21–48 (YHCEECDQLFESKTELSNHQKYSCGTPH), 75–97 (HECKECDQVFPDMQSLEKHLLSH), and 103–125 (YKCDQCPKAFNWKSNLIRHQMSH). A C2H2-type 4; degenerate zinc finger spans residues 131 to 155 (YECENCSKQVFTDPSNLQRHIRSQH). C2H2-type zinc fingers lie at residues 161–183 (HACSECGKTFATSSGLKQHKHIH) and 189–211 (FVCEVCHKSYTQFSNLCRHKRMH). Residues 218–240 (IKCKDCGQMFSTTSSLNKHRRFC) form a C2H2-type 7; atypical zinc finger. Disordered regions lie at residues 371–421 (ITEN…SDKD) and 529–612 (PLKV…EKKD). Over residues 379–390 (RPHEKVSDHSES) the composition is skewed to basic and acidic residues. Polar residues predominate over residues 397-411 (STPSGSDLETTSGSD). Residues 420 to 433 (KDKLKENGKLYKDK) carry the Nuclear localization signal motif. Basic and acidic residues predominate over residues 529 to 542 (PLKVEPESPKESKK). A CTBP-binding motif 1 motif is present at residues 551-555 (AFDLT). Low complexity predominate over residues 564 to 576 (SPNAPSKSSAPTS). The short motif at 582–586 (PLDLS) is the CTBP-binding motif 2 element. Over residues 588-598 (GSRSRATTTKQ) the composition is skewed to polar residues. Residues 599 to 612 (TESRKNHIFGEKKD) are compositionally biased toward basic and acidic residues. 3 C2H2-type zinc fingers span residues 731 to 753 (YTCRYCGKIFPRSANLTRHLRTH), 759 to 782 (YRCKYCDRSFSISSNLQRHIRNIH), and 788 to 810 (FKCHLCDRCFGQQTNLDRHLKKH). Positions 928–951 (KSEVNCKVSPSRHDDDDDDEEEDF) are disordered.

Homooligomer. Interacts with ctbp.

It is found in the nucleus. The protein resides in the nucleus speckle. Its function is as follows. Transcriptional repressor during pronephros development. Plays a role in regionalization of the pronephros; may promote formation of the distal tubule and duct over formation of the glomus and proximal tubule. The polypeptide is MDS1 and EVI1 complex locus protein EVI1-B (mecom-b) (Xenopus laevis (African clawed frog)).